Reading from the N-terminus, the 788-residue chain is Endonuclease MutS2 (788 aa).

332 to 339 (GPNTGGKT) serves as a coordination point for ATP. Residues 713–788 (VDLRGMDAEE…GTGVTVVELK (76 aa)) enclose the Smr domain.

It belongs to the DNA mismatch repair MutS family. MutS2 subfamily. In terms of assembly, homodimer. Binds to stalled ribosomes, contacting rRNA.

In terms of biological role, endonuclease that is involved in the suppression of homologous recombination and thus may have a key role in the control of bacterial genetic diversity. Functionally, acts as a ribosome collision sensor, splitting the ribosome into its 2 subunits. Detects stalled/collided 70S ribosomes which it binds and splits by an ATP-hydrolysis driven conformational change. Acts upstream of the ribosome quality control system (RQC), a ribosome-associated complex that mediates the extraction of incompletely synthesized nascent chains from stalled ribosomes and their subsequent degradation. Probably generates substrates for RQC. The polypeptide is Endonuclease MutS2 (Clostridium botulinum (strain ATCC 19397 / Type A)).